Consider the following 276-residue polypeptide: Shikimate dehydrogenase (NADP(+)) (276 aa).

Shikimate is bound by residues 15 to 17 (SMS) and threonine 63. Lysine 67 serves as the catalytic Proton acceptor. An NADP(+)-binding site is contributed by aspartate 79. Residues asparagine 88 and aspartate 103 each contribute to the shikimate site. Residues 130–134 (GAGGA), 154–159 (NRTLSR), and isoleucine 217 contribute to the NADP(+) site. Tyrosine 219 serves as a coordination point for shikimate. An NADP(+)-binding site is contributed by glycine 240.

The protein belongs to the shikimate dehydrogenase family. Homodimer.

The catalysed reaction is shikimate + NADP(+) = 3-dehydroshikimate + NADPH + H(+). The protein operates within metabolic intermediate biosynthesis; chorismate biosynthesis; chorismate from D-erythrose 4-phosphate and phosphoenolpyruvate: step 4/7. Functionally, involved in the biosynthesis of the chorismate, which leads to the biosynthesis of aromatic amino acids. Catalyzes the reversible NADPH linked reduction of 3-dehydroshikimate (DHSA) to yield shikimate (SA). The polypeptide is Shikimate dehydrogenase (NADP(+)) (Oceanobacillus iheyensis (strain DSM 14371 / CIP 107618 / JCM 11309 / KCTC 3954 / HTE831)).